We begin with the raw amino-acid sequence, 358 residues long: Vesicular integral-membrane protein VIP36 (358 aa).

A signal peptide spans 1-46 (MAAEAWLWRWGWGWGQRCPGRPGLPGPGPSPTTFLHLLLLLGPVAA). Topologically, residues 47–324 (DITDGNSEHL…FRNGPLTGWR (278 aa)) are lumenal. The region spanning 54-278 (EHLKREHSLI…DIISIKLFQL (225 aa)) is the L-type lectin-like domain. The a carbohydrate site is built by Ser-98 and Asp-133. Asp-164, Tyr-166, and Asn-168 together coordinate Ca(2+). An a carbohydrate-binding site is contributed by 166-168 (YPN). Asn-185 is a glycosylation site (N-linked (GlcNAc...) asparagine). His-192 contributes to the a carbohydrate binding site. Asp-195 contacts Ca(2+). An intrachain disulfide couples Cys-204 to Cys-241. 262–264 (GDL) is an a carbohydrate binding site. A helical transmembrane segment spans residues 325-347 (VFLLLLCALLGVVVCAVVGAVVF). The Cytoplasmic portion of the chain corresponds to 348 to 358 (QKRQERNKRFY).

Requires Ca(2+) as cofactor.

Its subcellular location is the golgi apparatus membrane. In terms of biological role, plays a role as an intracellular lectin in the early secretory pathway. Interacts with N-acetyl-D-galactosamine and high-mannose type glycans and may also bind to O-linked glycans. Involved in the transport and sorting of glycoproteins carrying high mannose-type glycans. The polypeptide is Vesicular integral-membrane protein VIP36 (Lman2) (Mus musculus (Mouse)).